A 541-amino-acid polypeptide reads, in one-letter code: 5' exonuclease Apollo (541 aa).

Residue Lys-334 forms a Glycyl lysine isopeptide (Lys-Gly) (interchain with G-Cter in SUMO2) linkage. The tract at residues 455-475 (PLLSRGDSGSPARGNQSDCVG) is disordered. Residues 492 to 507 (ESRGLALKYLLTPVHF) carry the TBM motif.

Belongs to the DNA repair metallo-beta-lactamase (DRMBL) family. As to quaternary structure, interacts with MUS81, MRE11 and FANCD2. Interacts with HSPA2, HSPA8 and HSPA14. Interacts with SPAG5. Interacts with TERF2; the interaction is direct. In terms of processing, ubiquitinated, leading to its degradation. Interaction with TERF2 protects it from ubiquitination.

The protein resides in the chromosome. It is found in the telomere. It localises to the nucleus. The protein localises to the cytoplasm. Its subcellular location is the cytoskeleton. The protein resides in the microtubule organizing center. It is found in the centrosome. The catalysed reaction is a beta-lactam + H2O = a substituted beta-amino acid. Its function is as follows. 5'-3' exonuclease that plays a central role in telomere maintenance and protection during S-phase. Participates in the protection of telomeres against non-homologous end-joining (NHEJ)-mediated repair, thereby ensuring that telomeres do not fuse. Plays a key role in telomeric loop (T loop) formation by being recruited by TERF2 at the leading end telomeres and by processing leading-end telomeres immediately after their replication via its exonuclease activity: generates 3' single-stranded overhang at the leading end telomeres avoiding blunt leading-end telomeres that are vulnerable to end-joining reactions and expose the telomere end in a manner that activates the DNA repair pathways. Together with TERF2, required to protect telomeres from replicative damage during replication by controlling the amount of DNA topoisomerase (TOP1, TOP2A and TOP2B) needed for telomere replication during fork passage and prevent aberrant telomere topology. Also involved in response to DNA damage: plays a role in response to DNA interstrand cross-links (ICLs) by facilitating double-strand break formation. In case of spindle stress, involved in prophase checkpoint. Possesses beta-lactamase activity, catalyzing the hydrolysis of penicillin G and nitrocefin. Exhibits no activity towards other beta-lactam antibiotic classes including cephalosporins (cefotaxime) and carbapenems (imipenem). The sequence is that of 5' exonuclease Apollo (Dclre1b) from Mus musculus (Mouse).